The sequence spans 204 residues: Protein-L-isoaspartate O-methyltransferase (204 aa).

The protein belongs to the methyltransferase superfamily. L-isoaspartyl/D-aspartyl protein methyltransferase family. In terms of assembly, monomer.

It is found in the cytoplasm. It carries out the reaction [protein]-L-isoaspartate + S-adenosyl-L-methionine = [protein]-L-isoaspartate alpha-methyl ester + S-adenosyl-L-homocysteine. Its function is as follows. Catalyzes the methyl esterification of L-isoaspartyl residues in peptides and proteins that result from spontaneous decomposition of normal L-aspartyl and L-asparaginyl residues. It plays a role in the repair and/or degradation of damaged proteins. This is Protein-L-isoaspartate O-methyltransferase (pcm) from Rhizobium meliloti (strain 1021) (Ensifer meliloti).